The following is a 314-amino-acid chain: NAC domain-containing protein 10 (314 aa).

Positions 18–39 are enriched in polar residues; that stretch reads VSNTDHPSVQLKDQSQSCVTSR. 2 disordered regions span residues 18 to 48 and 150 to 182; these read VSNT…SAET and YTTG…PVLS. One can recognise an NAC domain in the interval 77–236; sequence LPAGVKFDPS…EPVLSKVFYQ (160 aa). A compositionally biased stretch (basic and acidic residues) spans 160–171; it reads VSTDEEGHETRW. Residues 187–242 mediate DNA binding; it reads TGFKKILVLYTNYGRQKKPEKTNWVMHQYHLGSSEDEKDGEPVLSKVFYQTQPRQC.

In terms of tissue distribution, expressed in protoxylem and elongating interfascicular fiber cells of elongating internodes, developing metaxylem cells and interfascicular fibers of non-elongating internodes and developing secondary xylem of roots.

It is found in the nucleus. In terms of biological role, transcriptional activator that plays a regulatory role in the development of secondary cell wall fibers. Is a direct target of SND1. This is NAC domain-containing protein 10 from Arabidopsis thaliana (Mouse-ear cress).